The chain runs to 298 residues: N-acetylmuramic acid 6-phosphate etherase (298 aa).

The region spanning 55 to 218 (IHAQVSGGGR…STGLMIKSGK (164 aa)) is the SIS domain. The active-site Proton donor is the Glu-83. The active site involves Glu-114.

The protein belongs to the GCKR-like family. MurNAc-6-P etherase subfamily. In terms of assembly, homodimer.

The enzyme catalyses N-acetyl-D-muramate 6-phosphate + H2O = N-acetyl-D-glucosamine 6-phosphate + (R)-lactate. It participates in amino-sugar metabolism; 1,6-anhydro-N-acetylmuramate degradation. The protein operates within amino-sugar metabolism; N-acetylmuramate degradation. Its pathway is cell wall biogenesis; peptidoglycan recycling. Functionally, specifically catalyzes the cleavage of the D-lactyl ether substituent of MurNAc 6-phosphate, producing GlcNAc 6-phosphate and D-lactate. Together with AnmK, is also required for the utilization of anhydro-N-acetylmuramic acid (anhMurNAc) either imported from the medium or derived from its own cell wall murein, and thus plays a role in cell wall recycling. The protein is N-acetylmuramic acid 6-phosphate etherase of Escherichia fergusonii (strain ATCC 35469 / DSM 13698 / CCUG 18766 / IAM 14443 / JCM 21226 / LMG 7866 / NBRC 102419 / NCTC 12128 / CDC 0568-73).